A 340-amino-acid polypeptide reads, in one-letter code: Melanin-concentrating hormone receptor 2 (340 aa).

Residues 1-34 (MNPFHSSCWNTSAELSNKSWNKEFAYQTASAVDT) are Extracellular-facing. N-linked (GlcNAc...) asparagine glycans are attached at residues Asn10 and Asn17. The chain crosses the membrane as a helical span at residues 35–57 (VILPSMIGIICSTGLVGNILIVF). Residues 58–69 (TIIRSRKKTVPD) are Cytoplasmic-facing. A helical membrane pass occupies residues 70–92 (IYICNLAVADLVHIIGMPFLIHQ). The Extracellular segment spans residues 93 to 106 (WARGGEWVFGGPLC). A helical transmembrane segment spans residues 107–129 (TIITSLDTCNQFACSAIMTVMSV). The Cytoplasmic portion of the chain corresponds to 130 to 149 (DRYFALVQPFRLTSWRTRYK). Residues 150 to 172 (TIRINLGLWAASFILALPVWIYS) traverse the membrane as a helical segment. The Extracellular portion of the chain corresponds to 173–198 (KVIKFKDGVESCAFDLTSPDDVLWYT). A helical membrane pass occupies residues 199 to 221 (LYLTITTFFFPLPLILVCYILIL). Residues 222–252 (CYTWEMYQQNKDARCCNPSVPKQRVMKLTKM) lie on the Cytoplasmic side of the membrane. A helical transmembrane segment spans residues 253-272 (VLVLVAVFILSAAPYHVIQL). At 273–286 (VNLQMEQPTLAFYV) the chain is on the extracellular side. The helical transmembrane segment at 287-309 (GYYLSICLSYASSSINPFLYILL) threads the bilayer. Topologically, residues 310–340 (SGNFQKRLPQIQRRVTDKEIKNMGNTLKSHF) are cytoplasmic.

It belongs to the G-protein coupled receptor 1 family.

The protein resides in the cell membrane. Receptor for melanin-concentrating hormone, coupled to G proteins that activate phosphoinositide hydrolysis. In Macaca fascicularis (Crab-eating macaque), this protein is Melanin-concentrating hormone receptor 2 (MCHR2).